Reading from the N-terminus, the 326-residue chain is Chain length determinant protein (326 aa).

Residues 1–31 (MRVENNNVSGQNHDPEQIDLIDLLVQLWRGK) lie on the Cytoplasmic side of the membrane. Residues 32–52 (MTIIISVIVAIALAIGYLAVA) traverse the membrane as a helical segment. At 53–295 (KEKWTSTAII…LPIRRDSPKK (243 aa)) the chain is on the periplasmic side. The helical transmembrane segment at 296–316 (AITLILAVLLGGMVGAGIVLG) threads the bilayer. Over 317–326 (RNALRNYNAK) the chain is Cytoplasmic.

Belongs to the WzzB/Cld/Rol family. In terms of assembly, homodimer.

The protein localises to the cell inner membrane. It functions in the pathway bacterial outer membrane biogenesis; lipopolysaccharide biosynthesis. Its function is as follows. Confers a modal distribution of chain length on the O-antigen component of lipopolysaccharide (LPS). Gives rise to a reduced number of short chain molecules and increases in numbers of longer molecules. The protein is Chain length determinant protein (wzzB) of Escherichia coli (strain K12).